The primary structure comprises 62 residues: Rubredoxin-2 (62 aa).

The Rubredoxin-like domain maps to 7-58; sequence MWRCQMVNCGYVYDPDRGDKRRKVPAGTKFEDLPEDWRCPVCGAGKKSFRRL. Positions 10, 15, 45, and 48 each coordinate Fe cation.

Belongs to the rubredoxin family. In terms of assembly, monomer. The cofactor is Fe(3+).

Rubredoxin is a small nonheme, iron protein lacking acid-labile sulfide. Its single Fe, chelated to 4 Cys, functions as an electron acceptor and may also stabilize the conformation of the molecule. The sequence is that of Rubredoxin-2 (rd2) from Desulfovibrio desulfuricans (strain ATCC 27774 / DSM 6949 / MB).